Consider the following 119-residue polypeptide: Protein MRP-126 (119 aa).

EF-hand domains are found at residues 23–58 (DVFH…LKHV) and 59–94 (KNQV…VTVA). Positions 37, 42, 72, 74, 76, 78, and 83 each coordinate Ca(2+).

It belongs to the S-100 family. As to expression, expressed in v-myb-transformed myelomonocytic cells.

This Gallus gallus (Chicken) protein is Protein MRP-126.